The following is a 153-amino-acid chain: Nucleoside diphosphate kinase (153 aa).

Lys-13, Phe-61, Arg-89, Thr-95, Arg-106, and Asn-116 together coordinate ATP. His-119 serves as the catalytic Pros-phosphohistidine intermediate.

The protein belongs to the NDK family. Mg(2+) serves as cofactor.

The protein localises to the cytoplasm. The protein resides in the cell membrane. The enzyme catalyses a 2'-deoxyribonucleoside 5'-diphosphate + ATP = a 2'-deoxyribonucleoside 5'-triphosphate + ADP. The catalysed reaction is a ribonucleoside 5'-diphosphate + ATP = a ribonucleoside 5'-triphosphate + ADP. Its function is as follows. Major role in the synthesis of nucleoside triphosphates other than ATP. The ATP gamma phosphate is transferred to the NDP beta phosphate via a ping-pong mechanism, using a phosphorylated active-site intermediate. The protein is Nucleoside diphosphate kinase of Gallus gallus (Chicken).